The chain runs to 404 residues: Multidrug resistance protein MdtG (404 aa).

A run of 11 helical transmembrane segments spans residues 19–39 (LGCF…PLYV), 56–76 (LVFS…GGLA), 90–110 (LGMA…QFLI), 113–133 (ALLG…ATQV), 144–164 (TLST…GLLA), 171–191 (PVFF…FFFI), 222–242 (LFVT…ILTL), 254–274 (IAFI…LSAP), 288–308 (ILIV…FVQT), 317–337 (FLLG…LVYN), and 376–396 (AVFC…WNSL).

It belongs to the major facilitator superfamily. DHA1 family. MdtG (TC 2.A.1.2.20) subfamily.

The protein localises to the cell inner membrane. This Salmonella heidelberg (strain SL476) protein is Multidrug resistance protein MdtG.